A 134-amino-acid polypeptide reads, in one-letter code: Small ribosomal subunit protein uS9 (134 aa).

The interval 109–134 (KGDPRRKEPKKFGGRGARARRQKSYR) is disordered. Residues 115 to 134 (KEPKKFGGRGARARRQKSYR) show a composition bias toward basic residues.

It belongs to the universal ribosomal protein uS9 family.

The chain is Small ribosomal subunit protein uS9 from Methanopyrus kandleri (strain AV19 / DSM 6324 / JCM 9639 / NBRC 100938).